Here is a 119-residue protein sequence, read N- to C-terminus: Dihydroneopterin aldolase (119 aa).

Substrate contacts are provided by residues E21, Y53, and 72–73 (IE). The active-site Proton donor/acceptor is the K99.

Belongs to the DHNA family.

The catalysed reaction is 7,8-dihydroneopterin = 6-hydroxymethyl-7,8-dihydropterin + glycolaldehyde. Its pathway is cofactor biosynthesis; tetrahydrofolate biosynthesis; 2-amino-4-hydroxy-6-hydroxymethyl-7,8-dihydropteridine diphosphate from 7,8-dihydroneopterin triphosphate: step 3/4. Its function is as follows. Catalyzes the conversion of 7,8-dihydroneopterin to 6-hydroxymethyl-7,8-dihydropterin. The protein is Dihydroneopterin aldolase (folB) of Streptococcus pyogenes serotype M3 (strain ATCC BAA-595 / MGAS315).